The primary structure comprises 226 residues: Deoxyribose-phosphate aldolase (226 aa).

Residue aspartate 84 is the Proton donor/acceptor of the active site. Catalysis depends on lysine 146, which acts as the Schiff-base intermediate with acetaldehyde. Residue lysine 188 is the Proton donor/acceptor of the active site.

The protein belongs to the DeoC/FbaB aldolase family. DeoC type 1 subfamily. Homodimer.

It is found in the cytoplasm. The enzyme catalyses 2-deoxy-D-ribose 5-phosphate = D-glyceraldehyde 3-phosphate + acetaldehyde. It functions in the pathway carbohydrate degradation; 2-deoxy-D-ribose 1-phosphate degradation; D-glyceraldehyde 3-phosphate and acetaldehyde from 2-deoxy-alpha-D-ribose 1-phosphate: step 2/2. Functionally, catalyzes a reversible aldol reaction between acetaldehyde and D-glyceraldehyde 3-phosphate to generate 2-deoxy-D-ribose 5-phosphate. The protein is Deoxyribose-phosphate aldolase of Pyrobaculum aerophilum (strain ATCC 51768 / DSM 7523 / JCM 9630 / CIP 104966 / NBRC 100827 / IM2).